The primary structure comprises 307 residues: Opsin-like protein carO (307 aa).

N-linked (GlcNAc...) asparagine glycosylation is present at N28. 7 consecutive transmembrane segments (helical) span residues 36–56, 64–84, 118–138, 140–160, 166–186, 202–222, and 235–255; these read WYWA…GLGM, IFHY…FTMA, WFLT…MPWP, VLWV…GALV, WGYF…LAWE, FVMC…AWGV, and AVFY…LLLW. The segment at 280–307 is disordered; that stretch reads GPNNKVASGHGARNDTATASGSNVNPNA. N293 carries an N-linked (GlcNAc...) asparagine glycan. The segment covering 294–307 has biased composition (polar residues); sequence DTATASGSNVNPNA.

Belongs to the archaeal/bacterial/fungal opsin family.

The protein localises to the membrane. In terms of biological role, opsin-like protein; part of the car gene cluster that mediates the biosynthesis of neurosporaxanthin, a carboxylic apocarotenoid acting as an essential protective pigment and leading to orange pigmentation. The exact role of carO in carotenoid biosynthesis is not known yet, but it could be involved in the regulation of the pathway by light or other stimuli. This is Opsin-like protein carO from Fusarium fujikuroi (Bakanae and foot rot disease fungus).